The sequence spans 136 residues: Large ribosomal subunit protein uL22 (136 aa).

Belongs to the universal ribosomal protein uL22 family. In terms of assembly, part of the 50S ribosomal subunit.

This protein binds specifically to 23S rRNA; its binding is stimulated by other ribosomal proteins, e.g. L4, L17, and L20. It is important during the early stages of 50S assembly. It makes multiple contacts with different domains of the 23S rRNA in the assembled 50S subunit and ribosome. Its function is as follows. The globular domain of the protein is located near the polypeptide exit tunnel on the outside of the subunit, while an extended beta-hairpin is found that lines the wall of the exit tunnel in the center of the 70S ribosome. This chain is Large ribosomal subunit protein uL22, found in Leifsonia xyli subsp. xyli (strain CTCB07).